Reading from the N-terminus, the 438-residue chain is Plasmalemma vesicle-associated protein (438 aa).

Topologically, residues 1–26 (MGLSMDRSPYARTGDQQRGCWYYLRY) are cytoplasmic. Residues 27–47 (FFLFVSLIQFLIILGLVLFMI) traverse the membrane as a helical; Signal-anchor for type II membrane protein segment. The Extracellular portion of the chain corresponds to 48-438 (YGNVHATTES…VVNPAAQPSG (391 aa)). 4 N-linked (GlcNAc...) asparagine glycosylation sites follow: asparagine 82, asparagine 88, asparagine 112, and asparagine 150. 3 coiled-coil regions span residues 140–160 (KQCQEQLKEVNKTCEALLFKL), 189–224 (KRQTEEQLEACGKARERQQQEQQVTEENLRKVQSLC), and 281–383 (EELA…ISAL). The tract at residues 391 to 413 (SLPAVPPRVSGPPPNPPPIDPAS) is disordered. Over residues 394–410 (AVPPRVSGPPPNPPPID) the composition is skewed to pro residues.

Homodimer. In terms of tissue distribution, expressed in lung, kidney, spleen, heart, muscle, eye, pancreas, thyroid, thymus, submaxillary gland, prostate, epididymis, uterus and liver.

The protein localises to the cell membrane. It localises to the membrane. The protein resides in the caveola. Its subcellular location is the cytoplasm. It is found in the perinuclear region. Its function is as follows. Endothelial cell-specific membrane protein involved in the formation of the diaphragms that bridge endothelial fenestrae. It is also required for the formation of stomata of caveolae and transendothelial channels. Functions in microvascular permeability, endothelial fenestrae contributing to the passage of water and solutes and regulating transcellular versus paracellular flow in different organs. Plays a specific role in embryonic development. This chain is Plasmalemma vesicle-associated protein (Plvap), found in Mus musculus (Mouse).